A 159-amino-acid polypeptide reads, in one-letter code: Putative ribosomal RNA large subunit methyltransferase H (159 aa).

Residues Leu76, Gly108, and Phe127 to Phe132 each bind S-adenosyl-L-methionine.

The protein belongs to the RNA methyltransferase RlmH family.

It is found in the cytoplasm. It catalyses the reaction pseudouridine(1915) in 23S rRNA + S-adenosyl-L-methionine = N(3)-methylpseudouridine(1915) in 23S rRNA + S-adenosyl-L-homocysteine + H(+). Functionally, specifically methylates the pseudouridine at position 1915 (m3Psi1915) in 23S rRNA. The polypeptide is Putative ribosomal RNA large subunit methyltransferase H (Methanococcus vannielii (strain ATCC 35089 / DSM 1224 / JCM 13029 / OCM 148 / SB)).